The primary structure comprises 490 residues: Glycine--tRNA ligase (490 aa).

The substrate site is built by Arg-99 and Glu-163. Residues 195–197 (RNE), 205–210 (FRTREF), 282–283 (EL), and 326–329 (GLTR) each bind ATP. A substrate-binding site is contributed by 210-214 (FEQME). 322–326 (EPAAG) contributes to the substrate binding site. Positions 470–490 (PVEMGGEPWPESGVQEAGGLY) are disordered.

This sequence belongs to the class-II aminoacyl-tRNA synthetase family. Homodimer.

The protein resides in the cytoplasm. It catalyses the reaction tRNA(Gly) + glycine + ATP = glycyl-tRNA(Gly) + AMP + diphosphate. In terms of biological role, catalyzes the attachment of glycine to tRNA(Gly). The polypeptide is Glycine--tRNA ligase (Bifidobacterium longum (strain NCC 2705)).